A 665-amino-acid chain; its full sequence is Coiled-coil domain-containing protein 138 (665 aa).

Phosphothreonine is present on T48. A Phosphoserine modification is found at S49. Positions 198–323 form a coiled coil; sequence QQKFAEELQK…YEFMTIQRLK (126 aa). Position 469 is a phosphoserine (S469).

This chain is Coiled-coil domain-containing protein 138 (CCDC138), found in Homo sapiens (Human).